The chain runs to 448 residues: Trigger factor (448 aa).

In terms of domain architecture, PPIase FKBP-type spans 167-253; sequence GSIVRVDFVE…VKDIKRRDIP (87 aa).

It belongs to the FKBP-type PPIase family. Tig subfamily.

Its subcellular location is the cytoplasm. It catalyses the reaction [protein]-peptidylproline (omega=180) = [protein]-peptidylproline (omega=0). Involved in protein export. Acts as a chaperone by maintaining the newly synthesized protein in an open conformation. Functions as a peptidyl-prolyl cis-trans isomerase. This chain is Trigger factor, found in Borrelia recurrentis (strain A1).